The chain runs to 249 residues: 5'-nucleotidase SurE (249 aa).

Residues aspartate 9, aspartate 10, serine 40, and asparagine 92 each contribute to the a divalent metal cation site.

It belongs to the SurE nucleotidase family. Requires a divalent metal cation as cofactor.

It is found in the cytoplasm. The catalysed reaction is a ribonucleoside 5'-phosphate + H2O = a ribonucleoside + phosphate. Functionally, nucleotidase that shows phosphatase activity on nucleoside 5'-monophosphates. This is 5'-nucleotidase SurE from Shewanella frigidimarina (strain NCIMB 400).